The primary structure comprises 245 residues: 8-amino-3,8-dideoxy-manno-octulosonate cytidylyltransferase (245 aa).

The protein belongs to the KdsB family.

The protein localises to the cytoplasm. The enzyme catalyses 8-amino-3,8-dideoxy-alpha-D-manno-octulosonate + CTP = CMP-8-amino-3,8-dideoxy-alpha-D-manno-oct-2-ulosonate + diphosphate. The protein operates within bacterial outer membrane biogenesis; lipopolysaccharide biosynthesis. Its function is as follows. Activates KDO8N (a required 8-carbon sugar) for incorporation into bacterial lipopolysaccharide in the Shewanella genus. The sequence is that of 8-amino-3,8-dideoxy-manno-octulosonate cytidylyltransferase from Shewanella baltica (strain OS185).